The sequence spans 51 residues: MANYIEVFSVLAIIFATVLAALAQDCSPEGAQCVRDSECCYNECIDSLCQP.

An N-terminal signal peptide occupies residues 1 to 23; the sequence is MANYIEVFSVLAIIFATVLAALA. Disulfide bonds link Cys26–Cys40, Cys33–Cys44, and Cys39–Cys49.

This sequence belongs to the asilidin-1 family. As to expression, expressed by the venom gland. Is the most highly expressed peptide and is around 3000 times higher expressed in the thoracic glands compared to its body tissues.

Its subcellular location is the secreted. In terms of biological role, induces neurotoxic effect on honeybees, including slow movements, disorientation and paralysis. Since it provokes similar symptoms than omega-atracotoxin, it is probable that it acts in the same way by inhibiting voltage-gated calcium channels. The sequence is that of U-Asilidin(1)-Mar1a from Machimus arthriticus (Breck robberfly).